The primary structure comprises 361 residues: MVADTVHVGQHLAGHPSVHLFGHEIVLDVSIPALILSTVGAAFLLRYTLSIFRLFLELTVLPGKDIKSFQSRKGETWAVVTGCTSGIGLEFARQLAAKKFNIILVGRRQSALTDLSKEIESKYDVHTKSVTVDVSTPGSARDDALTQLELLAQNLDVGILINNVGASHSMPVAFHETERSEMSRIIETNVTWTYLVTRSILPSMVARSKQKGAPKSLVITIGSLSGRIPSPLLASYSGTKAALATWTKALAEEVKPQGVIVELVQAAFVVSNMSKIRKSSPFVPTPAPFVRSTLNSIGLPRGAQGRPHERTPFWSHAILDYVVGFAGYVSEMAGIKVILGMHKDIRKRALKKAARDEKKAE.

A helical membrane pass occupies residues 32-52 (PALILSTVGAAFLLRYTLSIF). Residues Val-79, Asp-133, Asn-163, Arg-198, Tyr-236, Lys-240, Val-269, and Ser-271 each contribute to the NADP(+) site. The active-site Proton donor is Tyr-236. Lys-240 (lowers pKa of active site Tyr) is an active-site residue.

The protein belongs to the short-chain dehydrogenases/reductases (SDR) family.

The protein localises to the endoplasmic reticulum membrane. It carries out the reaction a very-long-chain (3R)-3-hydroxyacyl-CoA + NADP(+) = a very-long-chain 3-oxoacyl-CoA + NADPH + H(+). The protein operates within lipid metabolism; fatty acid biosynthesis. In terms of biological role, component of the microsomal membrane bound fatty acid elongation system, which produces the 26-carbon very long-chain fatty acids (VLCFA) from palmitate. Catalyzes the reduction of the 3-ketoacyl-CoA intermediate that is formed in each cycle of fatty acid elongation. VLCFAs serve as precursors for ceramide and sphingolipids. The polypeptide is Very-long-chain 3-oxoacyl-CoA reductase (Cryptococcus neoformans var. neoformans serotype D (strain B-3501A) (Filobasidiella neoformans)).